Here is a 439-residue protein sequence, read N- to C-terminus: Glutamine synthetase (439 aa).

The GS beta-grasp domain occupies 12–93; that stretch reads RSPKFVQLIF…VYGYIYKDGK (82 aa). In terms of domain architecture, GS catalytic spans 99–439; sequence PRGVLKRVIE…EWELERYFFI (341 aa). Positions 122 and 124 each coordinate Mg(2+). Glutamate 172 is an ATP binding site. 2 residues coordinate Mg(2+): glutamate 177 and glutamate 184. L-glutamate is bound at residue glycine 229. Histidine 233 contacts Mg(2+). ATP is bound by residues 235-237 and serine 237; that span reads HIS. Positions 283, 289, and 301 each coordinate L-glutamate. Positions 301 and 306 each coordinate ATP. Position 318 (glutamate 318) interacts with Mg(2+). Residue arginine 320 coordinates L-glutamate.

The protein belongs to the glutamine synthetase family. In terms of assembly, oligomer of 12 subunits arranged in the form of two hexagons. Mg(2+) serves as cofactor.

It is found in the cytoplasm. The enzyme catalyses L-glutamate + NH4(+) + ATP = L-glutamine + ADP + phosphate + H(+). In terms of biological role, probably involved in nitrogen metabolism via ammonium assimilation. Catalyzes the ATP-dependent biosynthesis of glutamine from glutamate and ammonia. The protein is Glutamine synthetase of Pyrococcus abyssi (strain GE5 / Orsay).